Here is a 612-residue protein sequence, read N- to C-terminus: MFS siderochrome iron transporter B (612 aa).

Residues 1–86 (MLHVLSVGPS…GAQAGVKKIE (86 aa)) are Cytoplasmic-facing. The tract at residues 55–78 (DKEAAHAPANAETNNEEANPSDGA) is disordered. Residues 60–72 (HAPANAETNNEEA) show a composition bias toward low complexity. Residues 87-104 (AVTLSWTRGTAIWFLTLV) traverse the membrane as a helical segment. The Extracellular portion of the chain corresponds to 105-127 (NDFRLSMYTSLNAYATSSFLGHS). A helical transmembrane segment spans residues 128–148 (LLTVINIVSYVMGGSVYIPMA). Topologically, residues 149 to 156 (KALDLWGR) are cytoplasmic. Residues 157–177 (AEGFLLMTFFCILGLILLASS) form a helical membrane-spanning segment. At 178-187 (QNLPTYCAGQ) the chain is on the extracellular side. The helical transmembrane segment at 188–208 (VFYKVGFGGLSYTWNVLAADV) threads the bilayer. Topologically, residues 209–215 (TNLRNRG) are cytoplasmic. Residues 216 to 236 (LAFAFTSSPALISAFAGSKAA) form a helical membrane-spanning segment. The Extracellular portion of the chain corresponds to 237-246 (SDLLAHSTWR). A helical transmembrane segment spans residues 247–267 (WGFGMWAIILPVVALPIYGLL). Residues 268 to 302 (AYHLRQAEKKGVLVKETRDWSITPKTVWWAIMEFD) lie on the Cytoplasmic side of the membrane. The helical transmembrane segment at 303-323 (LPGVLLFAGGFVIFLLPFTLA) threads the bilayer. Topologically, residues 324–334 (ATAPHGYQTDY) are extracellular. Residues 335-355 (IIAMITLGLALIIAFGFYEML) form a helical membrane-spanning segment. Residues 356 to 370 (VAPVPFLNYKFLIDR) lie on the Cytoplasmic side of the membrane. A helical transmembrane segment spans residues 371–393 (TVLGACLLDMTYQVSYYCYASYL). Topologically, residues 394-409 (PSFLQVVYELDVATAG) are extracellular. Residues 410-430 (YVTNTFSVVSFVFLFFAGWLI) form a helical membrane-spanning segment. The Cytoplasmic segment spans residues 431–435 (RWTGR). Residues 436-456 (FKWILWVCVPLYIFGLGLMIH) form a helical membrane-spanning segment. The Extracellular segment spans residues 457-463 (FRQPGGY). The chain crosses the membrane as a helical span at residues 464–484 (IGYIVMCEIFFSVAGSVFILC). At 485–498 (VQLAVLASVDHQHV) the chain is on the cytoplasmic side. The helical transmembrane segment at 499 to 519 (AAVLALLFVMGSIGGSIGSAI) threads the bilayer. At 520 to 575 (CGAIWTSTFLSRLERNLPASAMPDLSLIYSSLPTQLSYPVGSATRTAIVEAYGYAQ) the chain is on the extracellular side. Residues 576-596 (ARMLIAGTAFMVLGFIWVGMM) form a helical membrane-spanning segment. The Cytoplasmic portion of the chain corresponds to 597–612 (RNLNVKNMTQTKGNVV).

Belongs to the major facilitator superfamily.

The protein resides in the cell tip. Its subcellular location is the cytoplasmic vesicle membrane. It is found in the cell membrane. Its function is as follows. Major facilitator transporter involved in triacetylfusarinine C (TAFC) uptake. Can also transport ferricrocin and coprogen, but not ferrichrysin. MirB plays a crucial role for virulence in a murine model of pulmonary aspergillosis, indicating that TAFC-mediated iron uptake plays a dominant role during infection. The polypeptide is MFS siderochrome iron transporter B (Aspergillus fumigatus (strain ATCC MYA-4609 / CBS 101355 / FGSC A1100 / Af293) (Neosartorya fumigata)).